Here is a 265-residue protein sequence, read N- to C-terminus: Leucine-rich repeat-containing protein Bf66946 (265 aa).

A signal peptide spans 1 to 20 (MALRDIFLLSMAMTAVTVQA). Disulfide bonds link cysteine 21/cysteine 27 and cysteine 25/cysteine 39. The LRRNT domain occupies 21–50 (CPSACKCTVSLYGEMVVACGGMGLTEIPED). 3 LRR repeats span residues 51-75 (IPHR…SFKG), 76-99 (LRNL…ALRH), and 100-123 (LGHL…LFDF). Asparagine 64 carries an N-linked (GlcNAc...) asparagine glycan. The region spanning 142-193 (NPWGCDCRMAWLAQELAGGSKTFGDRHMECATPAALAGRGLSEIPQTSFVCT) is the LRRCT domain. 2 cysteine pairs are disulfide-bonded: cysteine 146–cysteine 171 and cysteine 148–cysteine 192. Residues 220–240 (VAVVFGCITGLVTILLLVLTA) form a helical membrane-spanning segment.

It is found in the cell membrane. Binds selectively to the Gram-positive bacteria S.aureus and S.pneumoniae. Does not adhere to the Gram-negative bacteria E.coli and S.enterica. Probably recognizes peptidoglycans expressed on the bacterial cell surface. This is Leucine-rich repeat-containing protein Bf66946 from Branchiostoma floridae (Florida lancelet).